The sequence spans 142 residues: Large ribosomal subunit protein uL13 (142 aa).

It belongs to the universal ribosomal protein uL13 family. Part of the 50S ribosomal subunit.

Functionally, this protein is one of the early assembly proteins of the 50S ribosomal subunit, although it is not seen to bind rRNA by itself. It is important during the early stages of 50S assembly. This is Large ribosomal subunit protein uL13 from Nitrosococcus oceani (strain ATCC 19707 / BCRC 17464 / JCM 30415 / NCIMB 11848 / C-107).